The following is a 204-amino-acid chain: Elongation factor Ts (204 aa).

Positions 80–83 are involved in Mg(2+) ion dislocation from EF-Tu; it reads TDFV.

It belongs to the EF-Ts family.

It localises to the cytoplasm. In terms of biological role, associates with the EF-Tu.GDP complex and induces the exchange of GDP to GTP. It remains bound to the aminoacyl-tRNA.EF-Tu.GTP complex up to the GTP hydrolysis stage on the ribosome. This is Elongation factor Ts from Thermoanaerobacter sp. (strain X514).